The chain runs to 148 residues: Large ribosomal subunit protein uL15A (148 aa).

Basic residues-rich tracts occupy residues 1–13 (MPTH…KLRG) and 21–31 (RIGKHRKHPGG). A disordered region spans residues 1-36 (MPTHVSKTRKLRGHVSAGHGRIGKHRKHPGGRGKAG).

The protein belongs to the universal ribosomal protein uL15 family. In terms of assembly, component of the large ribosomal subunit (LSU). Mature yeast ribosomes consist of a small (40S) and a large (60S) subunit. The 40S small subunit contains 1 molecule of ribosomal RNA (18S rRNA) and at least 33 different proteins. The large 60S subunit contains 3 rRNA molecules (25S, 5.8S and 5S rRNA) and at least 46 different proteins.

The protein localises to the cytoplasm. In terms of biological role, component of the ribosome, a large ribonucleoprotein complex responsible for the synthesis of proteins in the cell. The small ribosomal subunit (SSU) binds messenger RNAs (mRNAs) and translates the encoded message by selecting cognate aminoacyl-transfer RNA (tRNA) molecules. The large subunit (LSU) contains the ribosomal catalytic site termed the peptidyl transferase center (PTC), which catalyzes the formation of peptide bonds, thereby polymerizing the amino acids delivered by tRNAs into a polypeptide chain. The nascent polypeptides leave the ribosome through a tunnel in the LSU and interact with protein factors that function in enzymatic processing, targeting, and the membrane insertion of nascent chains at the exit of the ribosomal tunnel. The protein is Large ribosomal subunit protein uL15A (rpl2802) of Schizosaccharomyces pombe (strain 972 / ATCC 24843) (Fission yeast).